A 348-amino-acid polypeptide reads, in one-letter code: MYGNMNNGGHAPYGYNGYRPSGGRMWGMSHSLPSGMSRYAFSPEDTDFTSSYPGPSMNRRGGYNDFSGGGGGGGGTMGSMNNMVNAASTNSLNCGGGGGRDGHGGGSNGTNLIVNYLPQDMTDRELYALFRTIGPINTCRIMRDYKTGYSFGYAFVDFAAETDSQRAIKSLNGITVRNKRLKVSYARPGGESIKDTNLYVTNLPRTITDDQLDTIFGKYGMIVQKNILRDKLTGKPRGVAFVRFNKREEAQEAISALNNVIPEGASQPLTVRLAEEHGKAKAQHYMSQLGLIGGGGGGGGGGGGGGGGMGGPPPPPMNMGYNNMVHRGRQNKSRFQKMHPYHNAQKFI.

RRM domains follow at residues 110–188 (TNLI…YARP) and 196–276 (TNLY…LAEE). A compositionally biased stretch (gly residues) spans 296–310 (GGGGGGGGGGGGGMG). The interval 296-317 (GGGGGGGGGGGGGMGGPPPPPM) is disordered.

It is found in the nucleus. Unknown; apparently not involved in somatic sex determination. The chain is Sex-lethal homolog (SXL) from Ceratitis capitata (Mediterranean fruit fly).